A 514-amino-acid chain; its full sequence is Probable transposase for insertion sequence element IS1353 (514 aa).

Residues 172-216 (KGDTSLEQRHEALLRELAELESQNQRLRMENAILEKASELIKKDM) adopt a coiled-coil conformation. In terms of domain architecture, Integrase catalytic spans 346 to 510 (HASAPNTKWL…SPIEYRHAVG (165 aa)). Residues Asp-357 and Asp-417 each contribute to the Mg(2+) site.

This sequence belongs to the transposase 8 family.

In terms of biological role, probably involved in the transposition of insertion sequence IS1353. The polypeptide is Probable transposase for insertion sequence element IS1353 (Shigella flexneri).